Consider the following 151-residue polypeptide: UPF0208 membrane protein YPDSF_1972 (151 aa).

Helical transmembrane passes span 46–66 (FGIR…IALG) and 69–89 (LGPA…GLWW).

This sequence belongs to the UPF0208 family.

It localises to the cell inner membrane. This chain is UPF0208 membrane protein YPDSF_1972, found in Yersinia pestis (strain Pestoides F).